Consider the following 310-residue polypeptide: Homeobox protein knotted-1-like 2 (310 aa).

The disordered stretch occupies residues Ser178–Asp208. Residues Ser185–Ala197 are compositionally biased toward acidic residues. The region spanning Asp208–Phe228 is the ELK domain. Positions Ser229–Ser292 form a DNA-binding region, homeobox; TALE-type.

It belongs to the TALE/KNOX homeobox family. As to quaternary structure, may form heterodimeric complex with the TALE/BELL protein BEL1, BLH1 and BLH2. Interacts with OFP12 and OFP14. Interacts with BZIP30. Expressed predominantly in shoot apices of seedlings, in the receptacle and developing pistil of flowers and in axillary buds of inflorescence stems.

The protein localises to the nucleus. Functionally, may play a role in meristem function, and may be involved in maintaining cells in an undifferentiated, meristematic state. Probably binds to the DNA sequence 5'-TGAC-3'. This chain is Homeobox protein knotted-1-like 2 (KNAT2), found in Arabidopsis thaliana (Mouse-ear cress).